A 976-amino-acid polypeptide reads, in one-letter code: Alpha-amylase (976 aa).

An N-terminal signal peptide occupies residues M1–A33. A disordered region spans residues T45 to Y98. The span at E50–A60 shows a compositional bias: low complexity. Acidic residues-rich tracts occupy residues S61 to I73 and G87 to D96. Residues N243, T284, and D293 each contribute to the Ca(2+) site. D323 acts as the Nucleophile in catalysis. H327 contacts Ca(2+). The active-site Proton donor is E375.

It belongs to the glycosyl hydrolase 13 family. In terms of assembly, monomer. Requires Ca(2+) as cofactor.

The enzyme catalyses Endohydrolysis of (1-&gt;4)-alpha-D-glucosidic linkages in polysaccharides containing three or more (1-&gt;4)-alpha-linked D-glucose units.. The protein is Alpha-amylase (amyA) of Butyrivibrio fibrisolvens.